A 637-amino-acid chain; its full sequence is MPVITLPNGSKREFSNPITVLDVAADIGPGLAKATLAGIVDGKEVDAGFTIEQDAALSIVTEKSPEGLEVIRHSTAHLLAQAVKSLFPEAQVTIGPVIDDGFYYDFAYSRAFTPEDLAAIEKKMTELSEQDIPVSRRVLPRDEAVAFFRGIGEDYKAEIIESIPANEDLSLYKQGDFEDLCRGPHVPSTGKLKYFKLMKVAGAYWRGDAKNEMLQRIYGTAWANKKDLKAYLHRLEEAEKRDHRKLGKKFDLFHLQEEAPGMVFWHPKGWSVYTAIEQYMRKVQRENGYKEIKTPQVVDRSLWERSGHWDKFRDGMFTVESESRDYAVKPMNCPCHIQVFNQGLKSYRDLPLRFAEFGSCHRNEASGTLQGIMRVRAFTQDDGHIFCAEDAIQSEVSIFTDLLYEVYRDFGFEDVIIRLSTRPEQRVGSEEVWDKSEKALADALNAKGLAFEYLPGEGAFYGPKIEFSLKDCIGRVWQCGTIQVDFSMPARLDAQFVAEDGSRQVPVMLHRAILGSFERFIGILIENYEGAFPPWLAPEQVVVMNITDNQAEYAEKVRNSLQNEGFRVVSDLRNEKIGFKIREHTIQKVPYLLVVGDQEMENNSVAVRTREGKDLGTYSVDDFATLLADSVAKRGRA.

Residues 1–61 (MPVITLPNGS…EQDAALSIVT (61 aa)) enclose the TGS domain. A catalytic region spans residues 242-533 (DHRKLGKKFD…LIENYEGAFP (292 aa)). 3 residues coordinate Zn(2+): C333, H384, and H510.

Belongs to the class-II aminoacyl-tRNA synthetase family. As to quaternary structure, homodimer. It depends on Zn(2+) as a cofactor.

It localises to the cytoplasm. The enzyme catalyses tRNA(Thr) + L-threonine + ATP = L-threonyl-tRNA(Thr) + AMP + diphosphate + H(+). Functionally, catalyzes the attachment of threonine to tRNA(Thr) in a two-step reaction: L-threonine is first activated by ATP to form Thr-AMP and then transferred to the acceptor end of tRNA(Thr). Also edits incorrectly charged L-seryl-tRNA(Thr). This Teredinibacter turnerae (strain ATCC 39867 / T7901) protein is Threonine--tRNA ligase.